The primary structure comprises 455 residues: Bifunctional protein GlmU (455 aa).

Residues 1–232 are pyrophosphorylase; that stretch reads MASITGALIL…DPNLLGVNDP (232 aa). UDP-N-acetyl-alpha-D-glucosamine is bound by residues 10-13, Lys-24, Gln-75, and 80-81; these read LAAG and GT. A Mg(2+)-binding site is contributed by Asp-106. UDP-N-acetyl-alpha-D-glucosamine contacts are provided by Gly-141, Glu-155, Asn-172, and Asn-230. Asn-230 contacts Mg(2+). A linker region spans residues 233–253; the sequence is AELIRSEALVRARIALNWIEK. The tract at residues 254-455 is N-acetyltransferase; that stretch reads RVLIHAPETV…QTTLPRRRNS (202 aa). UDP-N-acetyl-alpha-D-glucosamine is bound by residues Arg-336 and Lys-354. His-366 functions as the Proton acceptor in the catalytic mechanism. Tyr-369 and Asn-380 together coordinate UDP-N-acetyl-alpha-D-glucosamine. Residues Ala-383, 389–390, Ser-408, Ala-426, and Arg-443 contribute to the acetyl-CoA site; that span reads NY.

This sequence in the N-terminal section; belongs to the N-acetylglucosamine-1-phosphate uridyltransferase family. The protein in the C-terminal section; belongs to the transferase hexapeptide repeat family. Homotrimer. Mg(2+) serves as cofactor.

The protein localises to the cytoplasm. The enzyme catalyses alpha-D-glucosamine 1-phosphate + acetyl-CoA = N-acetyl-alpha-D-glucosamine 1-phosphate + CoA + H(+). It carries out the reaction N-acetyl-alpha-D-glucosamine 1-phosphate + UTP + H(+) = UDP-N-acetyl-alpha-D-glucosamine + diphosphate. It participates in nucleotide-sugar biosynthesis; UDP-N-acetyl-alpha-D-glucosamine biosynthesis; N-acetyl-alpha-D-glucosamine 1-phosphate from alpha-D-glucosamine 6-phosphate (route II): step 2/2. Its pathway is nucleotide-sugar biosynthesis; UDP-N-acetyl-alpha-D-glucosamine biosynthesis; UDP-N-acetyl-alpha-D-glucosamine from N-acetyl-alpha-D-glucosamine 1-phosphate: step 1/1. It functions in the pathway bacterial outer membrane biogenesis; LPS lipid A biosynthesis. In terms of biological role, catalyzes the last two sequential reactions in the de novo biosynthetic pathway for UDP-N-acetylglucosamine (UDP-GlcNAc). The C-terminal domain catalyzes the transfer of acetyl group from acetyl coenzyme A to glucosamine-1-phosphate (GlcN-1-P) to produce N-acetylglucosamine-1-phosphate (GlcNAc-1-P), which is converted into UDP-GlcNAc by the transfer of uridine 5-monophosphate (from uridine 5-triphosphate), a reaction catalyzed by the N-terminal domain. In Nitratidesulfovibrio vulgaris (strain DSM 19637 / Miyazaki F) (Desulfovibrio vulgaris), this protein is Bifunctional protein GlmU.